Reading from the N-terminus, the 234-residue chain is HTH-type transcriptional regulator ArcR (234 aa).

40–129 (VRHYTKGQVI…MAFLCKANDD (90 aa)) lines the a nucleoside 3',5'-cyclic phosphate pocket. Positions 155–228 (KFAKDRIIKL…HKNWLVSKHL (74 aa)) constitute an HTH crp-type domain. Residues 188–207 (IQLMSDMAGISRETAGHIIH) constitute a DNA-binding region (H-T-H motif).

The protein localises to the cytoplasm. In terms of biological role, positively regulates the expression of the arcABDCR operon under anaerobic conditions, thus playing an essential role in arginine catabolism. May also control the expression of genes encoding proteins which are involved in anaerobic metabolism. Can bind cyclic AMP. The polypeptide is HTH-type transcriptional regulator ArcR (arcR) (Staphylococcus aureus (strain USA300 / TCH1516)).